Reading from the N-terminus, the 233-residue chain is Maternal B9.15 protein (233 aa).

Positions 135–165 (KATSDYHSGTSSDEEPTNKEPKTIPKVSNPN) are disordered.

Belongs to the BTG family.

The protein is Maternal B9.15 protein of Xenopus laevis (African clawed frog).